A 350-amino-acid polypeptide reads, in one-letter code: Biotin synthase (350 aa).

Residues 38–257 (NKVQVSTLLS…AVARIIMPMS (220 aa)) enclose the Radical SAM core domain. [4Fe-4S] cluster contacts are provided by Cys-53, Cys-57, and Cys-60. 4 residues coordinate [2Fe-2S] cluster: Cys-97, Cys-128, Cys-188, and Arg-260.

It belongs to the radical SAM superfamily. Biotin synthase family. Homodimer. [4Fe-4S] cluster serves as cofactor. The cofactor is [2Fe-2S] cluster.

It carries out the reaction (4R,5S)-dethiobiotin + (sulfur carrier)-SH + 2 reduced [2Fe-2S]-[ferredoxin] + 2 S-adenosyl-L-methionine = (sulfur carrier)-H + biotin + 2 5'-deoxyadenosine + 2 L-methionine + 2 oxidized [2Fe-2S]-[ferredoxin]. It functions in the pathway cofactor biosynthesis; biotin biosynthesis; biotin from 7,8-diaminononanoate: step 2/2. Its function is as follows. Catalyzes the conversion of dethiobiotin (DTB) to biotin by the insertion of a sulfur atom into dethiobiotin via a radical-based mechanism. This chain is Biotin synthase, found in Photobacterium profundum (strain SS9).